The following is a 263-amino-acid chain: HTH-type transcriptional repressor NanR (263 aa).

The tract at residues 1–22 (MGLMNAFDSQTEDSSPAIGRNL) is disordered. An HTH gntR-type domain is found at 30–98 (KKLSEMVEEE…NGERARVSRP (69 aa)). The H-T-H motif DNA-binding region spans 58 to 77 (ERELMAFFNVGRPSVREALA).

Belongs to the NanR family.

Transcriptional repressor that controls expression of the genes required for the catabolism of sialic acids. The sequence is that of HTH-type transcriptional repressor NanR from Shigella dysenteriae serotype 1 (strain Sd197).